Consider the following 306-residue polypeptide: UDP-N-acetylenolpyruvoylglucosamine reductase (306 aa).

The FAD-binding PCMH-type domain maps to V34–S198. R177 is an active-site residue. S227 acts as the Proton donor in catalysis. E297 is an active-site residue.

This sequence belongs to the MurB family. It depends on FAD as a cofactor.

The protein localises to the cytoplasm. The enzyme catalyses UDP-N-acetyl-alpha-D-muramate + NADP(+) = UDP-N-acetyl-3-O-(1-carboxyvinyl)-alpha-D-glucosamine + NADPH + H(+). It participates in cell wall biogenesis; peptidoglycan biosynthesis. Functionally, cell wall formation. This is UDP-N-acetylenolpyruvoylglucosamine reductase from Clostridium botulinum (strain Langeland / NCTC 10281 / Type F).